The chain runs to 685 residues: Stromal interaction molecule 1 (685 aa).

The N-terminal stretch at 1–22 (MDVCVRLALWLLWGLLLHQGQS) is a signal peptide. Residues 23 to 213 (LSHSHSEKAT…LLTRHNHLKD (191 aa)) are Extracellular-facing. EF-hand domains follow at residues 64–97 (SFEAVRNIHKLMDDDANGDVDVEESDEFLREDLN) and 102–126 (TVKHSTFHGEDKLISVEDLWKAWKS). Positions 76, 78, 80, 82, and 87 each coordinate Ca(2+). Residues Asn-131 and Asn-171 are each glycosylated (N-linked (GlcNAc...) asparagine). The SAM domain maps to 132–200 (WTVDEVVQWL…QLKALDTVLF (69 aa)). The chain crosses the membrane as a helical span at residues 214–234 (FMLVVSIVIGVGGCWFAYIQN). At 235-685 (RYSKEHMKKM…LKIFKKPLKK (451 aa)) the chain is on the cytoplasmic side. A coiled-coil region spans residues 248–442 (LEGLHRAEQS…IEILCGFQIV (195 aa)). Ser-257 bears the Phosphoserine mark. The segment at 344-442 (PEALQKWLQL…IEILCGFQIV (99 aa)) is SOAR/CAD. Residues 475–483 (DDVDDMDEE) are contributes to fast Ca(2+)-dependent inactivation of CRAC channels. Residues 490-499 (MQSPSLQSSV) show a composition bias toward low complexity. The tract at residues 490 to 542 (MQSPSLQSSVRQRLTEPQHGLGSQRDLTHSDSESSLHMSDRQRVAPKPPQMSR) is disordered. A Phosphothreonine modification is found at Thr-504. Ser-512 is subject to Phosphoserine. The segment covering 515–532 (DLTHSDSESSLHMSDRQR) has biased composition (basic and acidic residues). Thr-517 is modified (phosphothreonine). 11 positions are modified to phosphoserine: Ser-519, Ser-521, Ser-523, Ser-524, Ser-567, Ser-575, Ser-602, Ser-608, Ser-618, Ser-621, and Ser-628. Residues 596–685 (LMELSPSAPP…LKIFKKPLKK (90 aa)) are disordered. The span at 608 to 620 (SPHLDSSRSHSPS) shows a compositional bias: low complexity. A Microtubule tip localization signal motif is present at residues 642 to 645 (TRIP). Residues 655 to 666 (EEDNGSIGEETD) are compositionally biased toward acidic residues. At Ser-660 the chain carries Phosphoserine. Thr-665 bears the Phosphothreonine mark. Ser-668 is subject to Phosphoserine. The segment covering 670-685 (GRKKFPLKIFKKPLKK) has biased composition (basic residues). The required for generation of inwardly rectifying CRAC currents stretch occupies residues 672–685 (KKFPLKIFKKPLKK).

In terms of assembly, monomer in the presence of Ca(2+); it oligomerizes in absence of Ca(2+). Forms homooligomers and heterooligomers with STIM2. Interacts with pore-forming subunits of CRAC channels, ORAI1, ORAI2 and ORAI3; this interaction is potentiated upon Ca(2+) store depletion. Interacts (via the transmembrane region and the SOAR/CAD domain) with SPPL3; the interaction promotes the binding of STIM1 to ORAI1. Interacts (via the SOAR/CAD domain) with ORAI1. Interacts with MAPRE1; probably required for targeting to the growing microtubule plus ends. Interacts with CRACR2A/EFCAB4B; the interaction is direct and takes place in absence of Ca(2+). Forms a complex with CRACR2A/EFCAB4B and ORAI1 at low concentration of Ca(2+), the complex dissociates at elevated Ca(2+) concentrations. Interacts with SARAF, promoting a slow inactivation of STIM1-dependent SOCE activity, possibly by facilitating the deoligomerization of STIM1. Interacts with EFHB; the interaction takes place upon Ca(2+)-store depletion and inhibits the association with SARAF. Interacts with ASPH (isoform 8). Interacts with SLC35G1; intracellular Ca(2+)-dependent. May interact with ATP1A1, ATP2A2, ATP2B1, ATP2B4, KPNB1 and XPO1; through SLC35G1. Interacts with TMEM203. Interacts with STIMATE, promoting STIM1 conformational switch. Interacts with TMEM178A. Interacts with CASQ1 (via C-terminal end and preferentially with the monomeric form); this interaction increases in response to a depletion of intracellular Ca(2+), decreases both STIM1 aggregation and clustering, interaction of STIM1 with ORAI1 and store-operated Ca(2+) entry (SOCE) activity. Interacts with ADCY8. Glycosylation is required for cell surface expression. Post-translationally, phosphorylated predominantly on Ser residues. Ubiquitously expressed in various human primary cells and tumor cell lines.

The protein resides in the cell membrane. Its subcellular location is the endoplasmic reticulum membrane. The protein localises to the cytoplasm. It is found in the cytoskeleton. It localises to the sarcoplasmic reticulum. Its function is as follows. Acts as a Ca(2+) sensor that gates two major inward rectifying Ca(2+) channels at the plasma membrane: Ca(2+) release-activated Ca(2+) (CRAC) channels and arachidonate-regulated Ca(2+)-selective (ARC) channels. Plays a role in mediating store-operated Ca(2+) entry (SOCE), a Ca(2+) influx following depletion of intracellular Ca(2+) stores. Upon Ca(2+) depletion, translocates from the endoplasmic reticulum to the plasma membrane where it activates CRAC channel pore-forming subunits ORA1, ORA2 and ORAI3 to generate sustained and oscillatory Ca(2+) entry. Involved in enamel formation. The protein is Stromal interaction molecule 1 (STIM1) of Homo sapiens (Human).